The sequence spans 213 residues: Nickel-cobalt-cadmium resistance protein NccN (213 aa).

4 helical membrane-spanning segments follow: residues 24 to 44 (IGIW…GHSQ), 48 to 68 (TWIS…ATVG), 113 to 133 (ESIT…PAVI), and 180 to 200 (NLAD…VELA).

It to A.eutrophus CzcN.

It localises to the cell inner membrane. In terms of biological role, component of the NCC cation-efflux system that confers resistance to nickel, cobalt and cadmium. Appears to be involved in metal specificity but affects only nickel resistance. May be involved in nickel transport. This Alcaligenes xylosoxydans xylosoxydans (Achromobacter xylosoxidans) protein is Nickel-cobalt-cadmium resistance protein NccN (nccN).